Reading from the N-terminus, the 969-residue chain is Translation initiation factor IF-2 (969 aa).

Residues 96–377 (KRDPAEPVRA…NSRNQHQDRR (282 aa)) are disordered. 3 stretches are compositionally biased toward low complexity: residues 105 to 157 (AEPA…QAEP), 167 to 181 (AAPA…EPAK), and 216 to 252 (PSAP…PAAP). The segment covering 253–264 (DRAREEARRAAE) has biased composition (basic and acidic residues). Gly residues predominate over residues 357-366 (RAGGKGGRGG). The tr-type G domain maps to 470 to 637 (PRAPVVTVMG…NVLLQAEILE (168 aa)). The segment at 479–486 (GHVDHGKT) is G1. 479 to 486 (GHVDHGKT) is a GTP binding site. The segment at 504–508 (GITQH) is G2. The tract at residues 525-528 (DTPG) is G3. GTP is bound by residues 525–529 (DTPGH) and 579–582 (NKID). The tract at residues 579-582 (NKID) is G4. The interval 615–617 (SAK) is G5.

It belongs to the TRAFAC class translation factor GTPase superfamily. Classic translation factor GTPase family. IF-2 subfamily.

The protein localises to the cytoplasm. Functionally, one of the essential components for the initiation of protein synthesis. Protects formylmethionyl-tRNA from spontaneous hydrolysis and promotes its binding to the 30S ribosomal subunits. Also involved in the hydrolysis of GTP during the formation of the 70S ribosomal complex. This Bordetella parapertussis (strain 12822 / ATCC BAA-587 / NCTC 13253) protein is Translation initiation factor IF-2.